A 60-amino-acid polypeptide reads, in one-letter code: UPF0181 protein PMI1604 (60 aa).

Belongs to the UPF0181 family.

This chain is UPF0181 protein PMI1604, found in Proteus mirabilis (strain HI4320).